The chain runs to 158 residues: Cytochrome b562 (158 aa).

4 consecutive transmembrane segments (helical) span residues 12–32 (ITLH…GETM), 46–66 (AGVG…LTLV), 87–107 (VAAG…ALGM), and 121–141 (HVLA…SALF). Heme b-binding residues include His15 and His53. The heme b site is built by His121 and His135.

The protein belongs to the cytochrome b561 family. In terms of assembly, homodimer. The cofactor is heme b.

It localises to the cell membrane. Cytochrome b562 is an integral component of the cytochrome b-c1 complex in the cyclic electron transfer system of photosynthetic bacteria. The polypeptide is Cytochrome b562 (Cereibacter sphaeroides (strain ATCC 17023 / DSM 158 / JCM 6121 / CCUG 31486 / LMG 2827 / NBRC 12203 / NCIMB 8253 / ATH 2.4.1.) (Rhodobacter sphaeroides)).